Here is a 133-residue protein sequence, read N- to C-terminus: Nickel-responsive regulator (133 aa).

Ni(2+)-binding residues include histidine 76, histidine 87, histidine 89, and cysteine 95.

It belongs to the transcriptional regulatory CopG/NikR family. In terms of assembly, homotetramer. It depends on Ni(2+) as a cofactor.

Transcriptional repressor of the nikABCDE operon. Is active in the presence of excessive concentrations of intracellular nickel. This chain is Nickel-responsive regulator, found in Escherichia fergusonii (strain ATCC 35469 / DSM 13698 / CCUG 18766 / IAM 14443 / JCM 21226 / LMG 7866 / NBRC 102419 / NCTC 12128 / CDC 0568-73).